We begin with the raw amino-acid sequence, 321 residues long: Biotin synthase (321 aa).

The region spanning 45–274 (FHGNRVDLCS…GALIRLCGGR (230 aa)) is the Radical SAM core domain. [4Fe-4S] cluster-binding residues include Cys63, Cys67, and Cys70. [2Fe-2S] cluster contacts are provided by Cys139, Cys199, and Arg269.

The protein belongs to the radical SAM superfamily. Biotin synthase family. In terms of assembly, homodimer. [4Fe-4S] cluster serves as cofactor. Requires [2Fe-2S] cluster as cofactor.

It catalyses the reaction (4R,5S)-dethiobiotin + (sulfur carrier)-SH + 2 reduced [2Fe-2S]-[ferredoxin] + 2 S-adenosyl-L-methionine = (sulfur carrier)-H + biotin + 2 5'-deoxyadenosine + 2 L-methionine + 2 oxidized [2Fe-2S]-[ferredoxin]. It functions in the pathway cofactor biosynthesis; biotin biosynthesis; biotin from 7,8-diaminononanoate: step 2/2. Catalyzes the conversion of dethiobiotin (DTB) to biotin by the insertion of a sulfur atom into dethiobiotin via a radical-based mechanism. In Pelotomaculum thermopropionicum (strain DSM 13744 / JCM 10971 / SI), this protein is Biotin synthase.